The chain runs to 383 residues: Agmatine deiminase (383 aa).

Residues Asp-220 and Asp-226 each coordinate agmatine. Cys-366 (amidino-cysteine intermediate) is an active-site residue.

This sequence belongs to the agmatine deiminase family. Forms homodimers.

The enzyme catalyses agmatine + H2O = N-carbamoylputrescine + NH4(+). Its pathway is amine and polyamine biosynthesis; putrescine biosynthesis via agmatine pathway; N-carbamoylputrescine from agmatine: step 1/1. Inhibited by N-ethylmaleimide and iodoacetamide. In terms of biological role, mediates the hydrolysis of agmatine into N-carbamoylputrescine in the arginine decarboxylase (ADC) pathway of putrescine biosynthesis, a basic polyamine. This Arabidopsis thaliana (Mouse-ear cress) protein is Agmatine deiminase (AIH).